Here is a 518-residue protein sequence, read N- to C-terminus: Bifunctional purine biosynthesis protein PurH (518 aa).

Residues 1 to 146 (MSPIALLSVS…KNHQDVLVVT (146 aa)) form the MGS-like domain.

This sequence belongs to the PurH family.

It catalyses the reaction (6R)-10-formyltetrahydrofolate + 5-amino-1-(5-phospho-beta-D-ribosyl)imidazole-4-carboxamide = 5-formamido-1-(5-phospho-D-ribosyl)imidazole-4-carboxamide + (6S)-5,6,7,8-tetrahydrofolate. The catalysed reaction is IMP + H2O = 5-formamido-1-(5-phospho-D-ribosyl)imidazole-4-carboxamide. The protein operates within purine metabolism; IMP biosynthesis via de novo pathway; 5-formamido-1-(5-phospho-D-ribosyl)imidazole-4-carboxamide from 5-amino-1-(5-phospho-D-ribosyl)imidazole-4-carboxamide (10-formyl THF route): step 1/1. It functions in the pathway purine metabolism; IMP biosynthesis via de novo pathway; IMP from 5-formamido-1-(5-phospho-D-ribosyl)imidazole-4-carboxamide: step 1/1. This Prochlorococcus marinus (strain NATL2A) protein is Bifunctional purine biosynthesis protein PurH.